A 308-amino-acid polypeptide reads, in one-letter code: Ankyrin repeat and SOCS box protein 12 (308 aa).

ANK repeat units lie at residues 63–92 (IPGT…DVDS), 96–125 (KAQT…CPSG), 129–158 (NNCS…EANV), 171–200 (SCSG…DPDY), and 213–243 (QPRT…NIYL). Positions 268 to 308 (PRSLLSQTRLVIRRSLCRANQSQATDQLDIPPVLISYLKHQ) constitute an SOCS box domain.

Belongs to the ankyrin SOCS box (ASB) family. Interacts with CUL5 and RNF7.

It functions in the pathway protein modification; protein ubiquitination. In terms of biological role, probable substrate-recognition component of a SCF-like ECS (Elongin-Cullin-SOCS-box protein) E3 ubiquitin-protein ligase complex which mediates the ubiquitination and subsequent proteasomal degradation of target proteins. This Mus musculus (Mouse) protein is Ankyrin repeat and SOCS box protein 12 (Asb12).